A 632-amino-acid polypeptide reads, in one-letter code: DNA ligase (632 aa).

NAD(+) is bound by residues 45–49 and 89–90; these read NEDYD and SI. K127 serves as the catalytic N6-AMP-lysine intermediate. Residues R143, E174, and K286 each coordinate NAD(+). Residues C374, C377, C390, and C396 each coordinate Zn(2+). The region spanning 561–632 is the BRCT domain; sequence DKRIVFTGKM…EADYLSKITM (72 aa).

Belongs to the NAD-dependent DNA ligase family. LigA subfamily. Mg(2+) is required as a cofactor. It depends on Mn(2+) as a cofactor.

The catalysed reaction is NAD(+) + (deoxyribonucleotide)n-3'-hydroxyl + 5'-phospho-(deoxyribonucleotide)m = (deoxyribonucleotide)n+m + AMP + beta-nicotinamide D-nucleotide.. In terms of biological role, DNA ligase that catalyzes the formation of phosphodiester linkages between 5'-phosphoryl and 3'-hydroxyl groups in double-stranded DNA using NAD as a coenzyme and as the energy source for the reaction. It is essential for DNA replication and repair of damaged DNA. The sequence is that of DNA ligase from Vesicomyosocius okutanii subsp. Calyptogena okutanii (strain HA).